Consider the following 175-residue polypeptide: MASSNMKDETYYIALNMIQNYIIEYNTNKPRKSFVIDSISYDVLKAACKSVIKTNYNEFDIIISRNIDFNVIVTQVLEDKINWGRIITIIAFCAYYSKKVKQDTSPQYYDGIISEAITDAILSKYRSWFIDQDYWNGIRIYKNYSYIFNTASYCIFTASLIIASLAVFKICSFYM.

The short motif at Gln-75 to Ala-94 is the BH1 element. The short motif at Ser-105–Ala-120 is the BH2 element.

It belongs to the Bcl-2 family. As to quaternary structure, interacts with host BAX; this interaction inhibits BAX oligomerization and subsequent activation. Interacts with host BAK1.

The protein resides in the host mitochondrion. Functionally, plays a role in the inhibition of host apoptosis by sequestering and inactivating multiple proapoptotic BCL-2 proteins, including BAK1 and BAX. The polypeptide is Apoptosis regulator Bcl-2 homolog (Vertebrata (FPV)).